Consider the following 512-residue polypeptide: MFGGRQSNNKSNDSLEQLINRATDETLTNDNWQYILDVCDNISSNPEEGTKQGIKVVSSRLASKDANIILRTLSLLVAMAENCGSRMRQEIATTSFVQESLLKKFTDRRLHKTVKFRVAEVIKQLHDSFKTDPSLKPMTDAYNRLVNDYSQYSAETADGPAKPAKKERSRQDKKKEEDELQRVLKLSLQEYEREQTVKKSYLNNKPLPQAQNESQYQEQPRQQQQQQQVLQNQPMHSTPTGQQSTQSPAESQTIATVSKVRALYDLISYEPDELSFRKGDIITVIESVYRDWWRGSLVNGKTGIFPLNYVTPVVTKTPQELSRELDEENRLLAVDSKRIDKLLALLSSNPETINEDEITRLYGDIIPLRTSLGKFIDKYNVRKEELSVLNSQLNNEVKLYNDLMDSSISQRVTHQPSGMSMAPYPTGVASPTHSSFSQANPSMLHQQPTSSGFGNARGNSSNEYFHSQQVPPTSFNQQSQPHSQPQPPQQSGPQRHNTEFSNINNFPNVNNI.

A VHS domain is found at 22–153 (ATDETLTNDN…RLVNDYSQYS (132 aa)). 2 disordered regions span residues 153–180 (SAETADGPAKPAKKERSRQDKKKEEDEL) and 200–253 (SYLN…ESQT). Positions 164 to 180 (AKKERSRQDKKKEEDEL) are enriched in basic and acidic residues. Positions 175-194 (KEEDELQRVLKLSLQEYERE) constitute a UIM domain. Over residues 215–233 (QYQEQPRQQQQQQQVLQNQ) the composition is skewed to low complexity. Polar residues predominate over residues 234–253 (PMHSTPTGQQSTQSPAESQT). The region spanning 255–315 (ATVSKVRALY…PLNYVTPVVT (61 aa)) is the SH3 domain. A disordered region spans residues 411–512 (RVTHQPSGMS…INNFPNVNNI (102 aa)). Positions 429 to 476 (ASPTHSSFSQANPSMLHQQPTSSGFGNARGNSSNEYFHSQQVPPTSFN) are enriched in polar residues. Over residues 502-512 (NINNFPNVNNI) the composition is skewed to low complexity.

This sequence belongs to the STAM family. In terms of assembly, component of the ESCRT-0 complex composed of HSE1 and VPS27.

It localises to the endosome membrane. Functionally, component of the ESCRT-0 complex which is the sorting receptor for ubiquitinated cargo proteins at the multivesicular body (MVB). The polypeptide is Class E vacuolar protein-sorting machinery protein HSE1 (HSE1) (Debaryomyces hansenii (strain ATCC 36239 / CBS 767 / BCRC 21394 / JCM 1990 / NBRC 0083 / IGC 2968) (Yeast)).